The primary structure comprises 347 residues: Methylthioribose-1-phosphate isomerase (347 aa).

Substrate-binding positions include 47–49 (RGA), Arg90, and Gln199. Asp240 serves as the catalytic Proton donor. Position 250–251 (250–251 (NK)) interacts with substrate.

It belongs to the eIF-2B alpha/beta/delta subunits family. MtnA subfamily.

The catalysed reaction is 5-(methylsulfanyl)-alpha-D-ribose 1-phosphate = 5-(methylsulfanyl)-D-ribulose 1-phosphate. It functions in the pathway amino-acid biosynthesis; L-methionine biosynthesis via salvage pathway; L-methionine from S-methyl-5-thio-alpha-D-ribose 1-phosphate: step 1/6. Its function is as follows. Catalyzes the interconversion of methylthioribose-1-phosphate (MTR-1-P) into methylthioribulose-1-phosphate (MTRu-1-P). This is Methylthioribose-1-phosphate isomerase from Natranaerobius thermophilus (strain ATCC BAA-1301 / DSM 18059 / JW/NM-WN-LF).